The primary structure comprises 483 residues: Glutamate mutase epsilon subunit (483 aa).

Residue Arg66 participates in L-glutamate binding. Gly68 contacts adenosylcob(III)alamin. L-glutamate is bound at residue Arg100. Asn123 contacts adenosylcob(III)alamin. L-glutamate-binding positions include 149–150, Glu171, and Tyr177; that span reads RH. Position 180 (Pro180) interacts with adenosylcob(III)alamin. Residue Tyr181 coordinates L-glutamate. Residues Phe297, Lys326, Glu330, and Ile334 each coordinate adenosylcob(III)alamin.

Belongs to the methylaspartate mutase GlmE subunit family. Heterotetramer composed of 2 epsilon subunits (GlmE) and 2 sigma subunits (GlmS). GlmE exists as a homodimer and GlmS as a monomer. The cofactor is adenosylcob(III)alamin.

It carries out the reaction (2S,3S)-3-methyl-L-aspartate = L-glutamate. It participates in amino-acid degradation; L-glutamate degradation via mesaconate pathway; acetate and pyruvate from L-glutamate: step 1/4. Its activity is regulated as follows. Competitively inhibited by (2S,4S)-4-fluoroglutamate, 2-methyleneglutarate, (2R,3RS)-3-fluoroglutamate and (S)-3-methylitaconate. Functionally, catalyzes the carbon skeleton rearrangement of L-glutamate to L-threo-3-methylaspartate ((2S,3S)-3-methylaspartate). The protein is Glutamate mutase epsilon subunit of Clostridium cochlearium.